We begin with the raw amino-acid sequence, 487 residues long: Inosine-5'-monophosphate dehydrogenase (487 aa).

2 consecutive CBS domains span residues Ile-93–Val-149 and Met-153–Glu-214. Residues Asp-248, Asp-248–Ser-250, and Gly-298–Gly-300 contribute to the NAD(+) site. K(+)-binding residues include Gly-300 and Gly-302. Ser-303 lines the IMP pocket. Cys-305 contacts K(+). Residue Cys-305 is the Thioimidate intermediate of the active site. IMP is bound by residues Asp-338 to Gly-340, Gly-361 to Ser-362, and Tyr-385 to Gly-389. The active-site Proton acceptor is Arg-401. Residue Glu-415 coordinates IMP. Glu-469, Ser-470, and His-471 together coordinate K(+).

It belongs to the IMPDH/GMPR family. Homotetramer. K(+) serves as cofactor.

The catalysed reaction is IMP + NAD(+) + H2O = XMP + NADH + H(+). It participates in purine metabolism; XMP biosynthesis via de novo pathway; XMP from IMP: step 1/1. With respect to regulation, mycophenolic acid (MPA) is a non-competitive inhibitor that prevents formation of the closed enzyme conformation by binding to the same site as the amobile flap. In contrast, mizoribine monophosphate (MZP) is a competitive inhibitor that induces the closed conformation. MPA is a potent inhibitor of mammalian IMPDHs but a poor inhibitor of the bacterial enzymes. MZP is a more potent inhibitor of bacterial IMPDH. Functionally, catalyzes the conversion of inosine 5'-phosphate (IMP) to xanthosine 5'-phosphate (XMP), the first committed and rate-limiting step in the de novo synthesis of guanine nucleotides, and therefore plays an important role in the regulation of cell growth. In Pasteurella multocida (strain Pm70), this protein is Inosine-5'-monophosphate dehydrogenase.